The chain runs to 273 residues: Homeobox protein ceh-43 (273 aa).

Disordered stretches follow at residues 47-79 (NGATGGSMYGTPQQTSAYAMYPPGPGSSPEEAF) and 153-204 (RRSK…LVSS). The homeobox DNA-binding region spans 102-161 (MRKPRTIYNSSQLQMLQKKFQKTQYLALPDRAALAHELGLSQTQVKIWFQNRRSKQKKQK).

The protein belongs to the distal-less homeobox family. In terms of tissue distribution, predominantly expressed in the head hypdodermis, neuronal support cells and CAN neurons.

It localises to the nucleus. Functionally, probable transcription factor. Binds to the sequence motif 5'-ATAAT-3' in regulatory elements. Required for development of the anterior hypodermis during embryonic morphogenesis for cell adhesion; also affects embryonic and larval viability. Modulates and maintains dopaminergic neuron differentiation. May activate dopamine pathway genes in concert with ETS domain-containing protein ast-1, and homeobox proteins ceh-40 and ceh-20. This chain is Homeobox protein ceh-43 (ceh-43), found in Caenorhabditis elegans.